The sequence spans 494 residues: Glycerol kinase (494 aa).

Threonine 13 is an ADP binding site. Positions 13, 14, and 15 each coordinate ATP. Threonine 13 contacts sn-glycerol 3-phosphate. Arginine 17 contacts ADP. Sn-glycerol 3-phosphate is bound by residues arginine 83, glutamate 84, tyrosine 135, and aspartate 244. 5 residues coordinate glycerol: arginine 83, glutamate 84, tyrosine 135, aspartate 244, and glutamine 245. ADP contacts are provided by threonine 266 and glycine 309. 4 residues coordinate ATP: threonine 266, glycine 309, glutamine 313, and glycine 410. The ADP site is built by glycine 410 and asparagine 414.

The protein belongs to the FGGY kinase family.

The enzyme catalyses glycerol + ATP = sn-glycerol 3-phosphate + ADP + H(+). Its pathway is polyol metabolism; glycerol degradation via glycerol kinase pathway; sn-glycerol 3-phosphate from glycerol: step 1/1. Its activity is regulated as follows. Inhibited by fructose 1,6-bisphosphate (FBP). Its function is as follows. Key enzyme in the regulation of glycerol uptake and metabolism. Catalyzes the phosphorylation of glycerol to yield sn-glycerol 3-phosphate. The sequence is that of Glycerol kinase from Shewanella sp. (strain MR-7).